We begin with the raw amino-acid sequence, 190 residues long: Vascular endothelial growth factor A (190 aa).

An N-terminal signal peptide occupies residues 1–26; that stretch reads MNFLLSWVHWSLALLLYLHHAKWSQA. 3 cysteine pairs are disulfide-bonded: C51/C93, C82/C127, and C86/C129. The N-linked (GlcNAc...) asparagine glycan is linked to N100.

Belongs to the PDGF/VEGF growth factor family. In terms of assembly, homodimer; disulfide-linked. Also found as heterodimer with PGF. Interacts with NRP1. Interacts with BSG. Interacts with CD82; this interaction inhibits VEGFA-mediated signaling pathway.

The protein localises to the secreted. In terms of biological role, growth factor active in angiogenesis, vasculogenesis and endothelial cell growth. Induces endothelial cell proliferation, promotes cell migration, inhibits apoptosis and induces permeabilization of blood vessels. Binds to the FLT1/VEGFR1 and KDR/VEGFR2 receptors, heparan sulfate and heparin. Binding to NRP1 receptor initiates a signaling pathway needed for motor neuron axon guidance and cell body migration, including for the caudal migration of facial motor neurons from rhombomere 4 to rhombomere 6 during embryonic development. Also binds the DEAR/FBXW7-AS1 receptor. This chain is Vascular endothelial growth factor A (VEGFA), found in Bos taurus (Bovine).